The sequence spans 440 residues: Alpha-methylserine aldolase (440 aa).

An N6-(pyridoxal phosphate)lysine modification is found at K255.

This sequence belongs to the SHMT family. Alpha-methylserine aldolase subfamily. As to quaternary structure, homodimer. Requires pyridoxal 5'-phosphate as cofactor.

The catalysed reaction is 2-methyl-L-serine = formaldehyde + L-alanine. Catalyzes the reversible interconversion of alpha-methyl-L-serine to L-alanine and formaldehyde. The chain is Alpha-methylserine aldolase from Variovorax paradoxus.